We begin with the raw amino-acid sequence, 305 residues long: Glycine--tRNA ligase alpha subunit (305 aa).

This sequence belongs to the class-II aminoacyl-tRNA synthetase family. Tetramer of two alpha and two beta subunits.

The protein localises to the cytoplasm. The catalysed reaction is tRNA(Gly) + glycine + ATP = glycyl-tRNA(Gly) + AMP + diphosphate. This is Glycine--tRNA ligase alpha subunit from Vibrio campbellii (strain ATCC BAA-1116).